The following is a 127-amino-acid chain: Large-conductance mechanosensitive channel (127 aa).

Helical transmembrane passes span 8-28 (FAFK…AAFG), 30-50 (IVTA…LSLI), and 70-90 (IGVL…LFLF).

The protein belongs to the MscL family. As to quaternary structure, homopentamer.

It localises to the cell membrane. In terms of biological role, channel that opens in response to stretch forces in the membrane lipid bilayer. May participate in the regulation of osmotic pressure changes within the cell. This is Large-conductance mechanosensitive channel from Herpetosiphon aurantiacus (strain ATCC 23779 / DSM 785 / 114-95).